A 347-amino-acid polypeptide reads, in one-letter code: Protein POOR HOMOLOGOUS SYNAPSIS 1 (347 aa).

Its subcellular location is the cytoplasm. Functionally, required for accurate chromosome segregation in meiosis. Required for pairing to occur between homologous chromosomes. Acts in early recombination steps and ensures pairing fidelity and proper repair of meiotic DNA double-strand-breaks. Regulates recombination and pairing of homologous chromosomes during meiotic prophase by controlling transport of RAD50 from cytoplasm to the nucleus. May affect pairing of the gene-rich fraction of the genome rather than preventing pairing between repetitive DNA elements. The sequence is that of Protein POOR HOMOLOGOUS SYNAPSIS 1 from Zea mays (Maize).